The chain runs to 85 residues: Small ribosomal subunit protein uS17 (85 aa).

The protein belongs to the universal ribosomal protein uS17 family. Part of the 30S ribosomal subunit.

Functionally, one of the primary rRNA binding proteins, it binds specifically to the 5'-end of 16S ribosomal RNA. The sequence is that of Small ribosomal subunit protein uS17 from Desulforapulum autotrophicum (strain ATCC 43914 / DSM 3382 / VKM B-1955 / HRM2) (Desulfobacterium autotrophicum).